The sequence spans 520 residues: Erythritol kinase (520 aa).

Belongs to the FGGY kinase family.

The catalysed reaction is erythritol + ATP = D-erythritol 1-phosphate + ADP + H(+). It functions in the pathway carbohydrate metabolism; erythritol degradation. In terms of biological role, catalyzes the phosphorylation of erythritol to D-erythritol-1-phosphate. This Brucella abortus (strain 2308) protein is Erythritol kinase.